Consider the following 398-residue polypeptide: Riboflavin biosynthesis protein RibBA (398 aa).

Residues 1–199 (MFHPIEEALE…IKDLIEYRYN (199 aa)) are DHBP synthase. D-ribulose 5-phosphate-binding positions include 26–27 (RE), aspartate 31, 138–142 (RAGHT), and glutamate 162. Mg(2+) is bound at residue glutamate 27. Histidine 141 contacts Mg(2+). The GTP cyclohydrolase II stretch occupies residues 200-398 (ITTLVNREVD…MKKLGHLLHF (199 aa)). A GTP-binding site is contributed by 251–255 (RVHSE). Residues cysteine 256, cysteine 267, and cysteine 269 each contribute to the Zn(2+) site. GTP is bound by residues glutamine 272, 294 to 296 (EGR), and threonine 316. Aspartate 328 functions as the Proton acceptor; for GTP cyclohydrolase activity in the catalytic mechanism. The Nucleophile; for GTP cyclohydrolase activity role is filled by arginine 330. Residues threonine 351 and lysine 356 each contribute to the GTP site.

In the N-terminal section; belongs to the DHBP synthase family. This sequence in the C-terminal section; belongs to the GTP cyclohydrolase II family. It depends on Mg(2+) as a cofactor. Mn(2+) serves as cofactor. The cofactor is Zn(2+).

It catalyses the reaction D-ribulose 5-phosphate = (2S)-2-hydroxy-3-oxobutyl phosphate + formate + H(+). It carries out the reaction GTP + 4 H2O = 2,5-diamino-6-hydroxy-4-(5-phosphoribosylamino)-pyrimidine + formate + 2 phosphate + 3 H(+). It participates in cofactor biosynthesis; riboflavin biosynthesis; 2-hydroxy-3-oxobutyl phosphate from D-ribulose 5-phosphate: step 1/1. Its pathway is cofactor biosynthesis; riboflavin biosynthesis; 5-amino-6-(D-ribitylamino)uracil from GTP: step 1/4. Functionally, catalyzes the conversion of D-ribulose 5-phosphate to formate and 3,4-dihydroxy-2-butanone 4-phosphate. In terms of biological role, catalyzes the conversion of GTP to 2,5-diamino-6-ribosylamino-4(3H)-pyrimidinone 5'-phosphate (DARP), formate and pyrophosphate. The protein is Riboflavin biosynthesis protein RibBA of Bacillus velezensis (strain DSM 23117 / BGSC 10A6 / LMG 26770 / FZB42) (Bacillus amyloliquefaciens subsp. plantarum).